A 426-amino-acid chain; its full sequence is Putative nickel insertion protein (426 aa).

Belongs to the LarC family.

The polypeptide is Putative nickel insertion protein (Nostoc sp. (strain PCC 7120 / SAG 25.82 / UTEX 2576)).